Here is a 710-residue protein sequence, read N- to C-terminus: Probable thimet oligopeptidase (710 aa).

Residue H502 coordinates Zn(2+). Residue E503 is part of the active site. H506 is a binding site for Zn(2+).

This sequence belongs to the peptidase M3 family. It depends on Zn(2+) as a cofactor.

It is found in the cytoplasm. The enzyme catalyses Preferential cleavage of bonds with hydrophobic residues at P1, P2 and P3' and a small residue at P1' in substrates of 5 to 15 residues.. Its function is as follows. Involved in cytoplasmic peptide degradation. This chain is Probable thimet oligopeptidase, found in Arabidopsis thaliana (Mouse-ear cress).